A 404-amino-acid polypeptide reads, in one-letter code: Cysteine desulfurase IscS (404 aa).

Residues 75–76, Asn155, Gln183, and 203–205 contribute to the pyridoxal 5'-phosphate site; these read AT and SAH. Position 206 is an N6-(pyridoxal phosphate)lysine (Lys206). Thr243 lines the pyridoxal 5'-phosphate pocket. Cys328 functions as the Cysteine persulfide intermediate in the catalytic mechanism. [2Fe-2S] cluster is bound at residue Cys328.

It belongs to the class-V pyridoxal-phosphate-dependent aminotransferase family. NifS/IscS subfamily. In terms of assembly, homodimer. Forms a heterotetramer with IscU, interacts with other sulfur acceptors. It depends on pyridoxal 5'-phosphate as a cofactor.

Its subcellular location is the cytoplasm. The enzyme catalyses (sulfur carrier)-H + L-cysteine = (sulfur carrier)-SH + L-alanine. Its pathway is cofactor biosynthesis; iron-sulfur cluster biosynthesis. Master enzyme that delivers sulfur to a number of partners involved in Fe-S cluster assembly, tRNA modification or cofactor biosynthesis. Catalyzes the removal of elemental sulfur atoms from cysteine to produce alanine. Functions as a sulfur delivery protein for Fe-S cluster synthesis onto IscU, an Fe-S scaffold assembly protein, as well as other S acceptor proteins. The protein is Cysteine desulfurase IscS of Neisseria meningitidis serogroup A / serotype 4A (strain DSM 15465 / Z2491).